A 380-amino-acid polypeptide reads, in one-letter code: Erythronate-4-phosphate dehydrogenase (380 aa).

Substrate contacts are provided by serine 45 and threonine 66. NAD(+) contacts are provided by residues aspartate 146, threonine 174, 205 to 207, and aspartate 231; that span reads ASR. The active site involves arginine 207. Residue glutamate 236 is part of the active site. The Proton donor role is filled by histidine 253. Glycine 256 provides a ligand contact to NAD(+). Position 257 (tyrosine 257) interacts with substrate.

Belongs to the D-isomer specific 2-hydroxyacid dehydrogenase family. PdxB subfamily. As to quaternary structure, homodimer.

The protein localises to the cytoplasm. It carries out the reaction 4-phospho-D-erythronate + NAD(+) = (R)-3-hydroxy-2-oxo-4-phosphooxybutanoate + NADH + H(+). Its pathway is cofactor biosynthesis; pyridoxine 5'-phosphate biosynthesis; pyridoxine 5'-phosphate from D-erythrose 4-phosphate: step 2/5. Its function is as follows. Catalyzes the oxidation of erythronate-4-phosphate to 3-hydroxy-2-oxo-4-phosphonooxybutanoate. This chain is Erythronate-4-phosphate dehydrogenase, found in Pseudomonas fluorescens (strain SBW25).